Reading from the N-terminus, the 292-residue chain is 3-methyl-2-oxobutanoate hydroxymethyltransferase 2 (292 aa).

2 residues coordinate Mg(2+): D52 and D91. 3-methyl-2-oxobutanoate contacts are provided by residues 52–53, D91, and K120; that span reads DS. E122 serves as a coordination point for Mg(2+). E189 functions as the Proton acceptor in the catalytic mechanism.

Belongs to the PanB family. In terms of assembly, homodecamer; pentamer of dimers. Mg(2+) serves as cofactor.

The protein resides in the cytoplasm. The enzyme catalyses 3-methyl-2-oxobutanoate + (6R)-5,10-methylene-5,6,7,8-tetrahydrofolate + H2O = 2-dehydropantoate + (6S)-5,6,7,8-tetrahydrofolate. The protein operates within cofactor biosynthesis; (R)-pantothenate biosynthesis; (R)-pantoate from 3-methyl-2-oxobutanoate: step 1/2. Its function is as follows. Catalyzes the reversible reaction in which hydroxymethyl group from 5,10-methylenetetrahydrofolate is transferred onto alpha-ketoisovalerate to form ketopantoate. This Bradyrhizobium diazoefficiens (strain JCM 10833 / BCRC 13528 / IAM 13628 / NBRC 14792 / USDA 110) protein is 3-methyl-2-oxobutanoate hydroxymethyltransferase 2.